A 259-amino-acid chain; its full sequence is Type III pantothenate kinase (259 aa).

6–13 (DTGNTNTV) provides a ligand contact to ATP. Residue 107-110 (GPDR) participates in substrate binding. Catalysis depends on Asp-109, which acts as the Proton acceptor. Asp-129 is a K(+) binding site. Position 132 (Thr-132) interacts with ATP. Position 184 (Thr-184) interacts with substrate.

It belongs to the type III pantothenate kinase family. In terms of assembly, homodimer. The cofactor is NH4(+). K(+) is required as a cofactor.

Its subcellular location is the cytoplasm. The enzyme catalyses (R)-pantothenate + ATP = (R)-4'-phosphopantothenate + ADP + H(+). The protein operates within cofactor biosynthesis; coenzyme A biosynthesis; CoA from (R)-pantothenate: step 1/5. Catalyzes the phosphorylation of pantothenate (Pan), the first step in CoA biosynthesis. The protein is Type III pantothenate kinase of Paracoccus denitrificans (strain Pd 1222).